The primary structure comprises 443 residues: Chromosomal replication initiator protein DnaA (443 aa).

The interval 1-76 (MMDAWPRCLE…GNGEVALAVG (76 aa)) is domain I, interacts with DnaA modulators. The segment at 76 to 105 (GSRPRAPEPAPAPVAATIAPQAAPIAPFAG) is domain II. Residues 106 to 323 (NLDSHYTFAN…GALNTLVARA (218 aa)) are domain III, AAA+ region. Positions 151, 153, 154, and 155 each coordinate ATP. The segment at 324-443 (NFTGRSITVE…WEKLIRKLSE (120 aa)) is domain IV, binds dsDNA.

This sequence belongs to the DnaA family. In terms of assembly, oligomerizes as a right-handed, spiral filament on DNA at oriC.

The protein localises to the cytoplasm. In terms of biological role, plays an essential role in the initiation and regulation of chromosomal replication. ATP-DnaA binds to the origin of replication (oriC) to initiate formation of the DNA replication initiation complex once per cell cycle. Binds the DnaA box (a 9 base pair repeat at the origin) and separates the double-stranded (ds)DNA. Forms a right-handed helical filament on oriC DNA; dsDNA binds to the exterior of the filament while single-stranded (ss)DNA is stabiized in the filament's interior. The ATP-DnaA-oriC complex binds and stabilizes one strand of the AT-rich DNA unwinding element (DUE), permitting loading of DNA polymerase. After initiation quickly degrades to an ADP-DnaA complex that is not apt for DNA replication. Binds acidic phospholipids. The protein is Chromosomal replication initiator protein DnaA of Xanthomonas oryzae pv. oryzae (strain KACC10331 / KXO85).